The chain runs to 297 residues: MTTPRNSMSGTLPVDPMKSPTAMYPVQKIIPKRMPSVVGPTQNFFMRESKTLGAVQIMNGLFHIALGSLLMIHTDVCAPICITMWYPLWGGIMFIISGSLLAAADKNPRKSLVKGKMIMNSLSLFAAISGIIFLIMDIFNITISHFFKMENLNLIKAPMPYVDIHNCDPANPSEKNSLSIQYCGSIRSVFLGVFAVMLIFAFFQKLVTAGIVENEWKKLCSKPKSDVVVLLAAEEKKEQPIETTEEMVELTEIASQPKKEEDIEIIPVQEEEGELEINFAEPPQEQESSPIENDSIP.

Over 1 to 51 (MTTPRNSMSGTLPVDPMKSPTAMYPVQKIIPKRMPSVVGPTQNFFMRESKT) the chain is Cytoplasmic. Ser36 bears the Phosphoserine mark. A helical membrane pass occupies residues 52–72 (LGAVQIMNGLFHIALGSLLMI). The Extracellular segment spans residues 73–75 (HTD). A helical membrane pass occupies residues 76 to 96 (VCAPICITMWYPLWGGIMFII). The Cytoplasmic portion of the chain corresponds to 97–122 (SGSLLAAADKNPRKSLVKGKMIMNSL). The helical transmembrane segment at 123-143 (SLFAAISGIIFLIMDIFNITI) threads the bilayer. At 144–188 (SHFFKMENLNLIKAPMPYVDIHNCDPANPSEKNSLSIQYCGSIRS) the chain is on the extracellular side. The helical transmembrane segment at 189–209 (VFLGVFAVMLIFAFFQKLVTA) threads the bilayer. Residues 210–297 (GIVENEWKKL…SSPIENDSIP (88 aa)) are Cytoplasmic-facing. The S-palmitoyl cysteine moiety is linked to residue Cys220. At Ser225 the chain carries Phosphoserine. The disordered stretch occupies residues 274–297 (ELEINFAEPPQEQESSPIENDSIP). Over residues 281 to 290 (EPPQEQESSP) the composition is skewed to low complexity.

The protein belongs to the MS4A family. In terms of assembly, forms homotetramers. Interacts with the heavy and light chains of cell surface IgM, the antigen-binding components of the BCR. Phosphorylated. Might be functionally regulated by protein kinase(s). As to expression, expressed in PBMCs and lymph node from healthy dogs, in B-cells of canine lymphoma, but not in T-cell lymphoma cells and non-T and non-B-cell lymphoma cells.

The protein resides in the cell membrane. B-lymphocyte-specific membrane protein that plays a role in the regulation of cellular calcium influx necessary for the development, differentiation, and activation of B-lymphocytes. Functions as a store-operated calcium (SOC) channel component promoting calcium influx after activation by the B-cell receptor/BCR. This is B-lymphocyte antigen CD20 (MS4A1) from Canis lupus familiaris (Dog).